The chain runs to 207 residues: Putative 3-methyladenine DNA glycosylase (207 aa).

It belongs to the DNA glycosylase MPG family.

The polypeptide is Putative 3-methyladenine DNA glycosylase (Burkholderia lata (strain ATCC 17760 / DSM 23089 / LMG 22485 / NCIMB 9086 / R18194 / 383)).